Here is a 718-residue protein sequence, read N- to C-terminus: Pullulanase (718 aa).

Aspartate 406 functions as the Nucleophile in the catalytic mechanism. Glutamate 435 functions as the Proton donor in the catalytic mechanism.

This sequence belongs to the glycosyl hydrolase 13 family.

It catalyses the reaction Hydrolysis of (1-&gt;6)-alpha-D-glucosidic linkages in pullulan, amylopectin and glycogen, and in the alpha- and beta-limit dextrins of amylopectin and glycogen.. The polypeptide is Pullulanase (amyX) (Bacillus subtilis (strain 168)).